Here is a 141-residue protein sequence, read N- to C-terminus: Large ribosomal subunit protein uL11 (141 aa).

Belongs to the universal ribosomal protein uL11 family. In terms of assembly, part of the ribosomal stalk of the 50S ribosomal subunit. Interacts with L10 and the large rRNA to form the base of the stalk. L10 forms an elongated spine to which L12 dimers bind in a sequential fashion forming a multimeric L10(L12)X complex. In terms of processing, one or more lysine residues are methylated.

In terms of biological role, forms part of the ribosomal stalk which helps the ribosome interact with GTP-bound translation factors. The protein is Large ribosomal subunit protein uL11 of Prochlorococcus marinus (strain MIT 9515).